A 32-amino-acid polypeptide reads, in one-letter code: Cytochrome b6-f complex subunit 7 (32 aa).

Residues 9-27 (AVLSSVLVLVGLAIGFLLL) traverse the membrane as a helical segment.

The protein belongs to the PetM family. The 4 large subunits of the cytochrome b6-f complex are cytochrome b6, subunit IV (17 kDa polypeptide, PetD), cytochrome f and the Rieske protein, while the 4 small subunits are PetG, PetL, PetM and PetN. The complex functions as a dimer.

It is found in the plastid. The protein localises to the chloroplast thylakoid membrane. Functionally, component of the cytochrome b6-f complex, which mediates electron transfer between photosystem II (PSII) and photosystem I (PSI), cyclic electron flow around PSI, and state transitions. This Pyropia yezoensis (Susabi-nori) protein is Cytochrome b6-f complex subunit 7.